Consider the following 345-residue polypeptide: Annexin A9 (345 aa).

4 Annexin repeats span residues 41–112 (FSVD…ALLQ), 113–184 (PTAQ…ALAK), 197–266 (NLAE…GLAS), and 270–341 (NTPL…ALCR).

This sequence belongs to the annexin family. As to quaternary structure, homodimer. Expressed in the stratified squamous skin epithelium, but not in epithelia of other types (at protein level).

Its function is as follows. Low affinity receptor for acetylcholine known to be targeted by disease-causing pemphigus vulgaris antibodies in keratinocytes. In Homo sapiens (Human), this protein is Annexin A9 (ANXA9).